The following is a 640-amino-acid chain: 1,4-alpha-glucan branching enzyme GlgB (640 aa).

Catalysis depends on aspartate 318, which acts as the Nucleophile. Residue glutamate 371 is the Proton donor of the active site.

It belongs to the glycosyl hydrolase 13 family. GlgB subfamily. In terms of assembly, monomer.

The catalysed reaction is Transfers a segment of a (1-&gt;4)-alpha-D-glucan chain to a primary hydroxy group in a similar glucan chain.. It participates in glycan biosynthesis; glycogen biosynthesis. Catalyzes the formation of the alpha-1,6-glucosidic linkages in glycogen by scission of a 1,4-alpha-linked oligosaccharide from growing alpha-1,4-glucan chains and the subsequent attachment of the oligosaccharide to the alpha-1,6 position. The sequence is that of 1,4-alpha-glucan branching enzyme GlgB from Francisella tularensis subsp. holarctica (strain LVS).